The chain runs to 252 residues: Ubiquinone/menaquinone biosynthesis C-methyltransferase UbiE (252 aa).

Residues Thr-71, Asp-100, 124-125, and Ser-141 each bind S-adenosyl-L-methionine; that span reads DA.

It belongs to the class I-like SAM-binding methyltransferase superfamily. MenG/UbiE family.

The catalysed reaction is a 2-demethylmenaquinol + S-adenosyl-L-methionine = a menaquinol + S-adenosyl-L-homocysteine + H(+). It catalyses the reaction a 2-methoxy-6-(all-trans-polyprenyl)benzene-1,4-diol + S-adenosyl-L-methionine = a 5-methoxy-2-methyl-3-(all-trans-polyprenyl)benzene-1,4-diol + S-adenosyl-L-homocysteine + H(+). It participates in quinol/quinone metabolism; menaquinone biosynthesis; menaquinol from 1,4-dihydroxy-2-naphthoate: step 2/2. The protein operates within cofactor biosynthesis; ubiquinone biosynthesis. Methyltransferase required for the conversion of demethylmenaquinol (DMKH2) to menaquinol (MKH2) and the conversion of 2-polyprenyl-6-methoxy-1,4-benzoquinol (DDMQH2) to 2-polyprenyl-3-methyl-6-methoxy-1,4-benzoquinol (DMQH2). This is Ubiquinone/menaquinone biosynthesis C-methyltransferase UbiE from Caulobacter sp. (strain K31).